Here is a 296-residue protein sequence, read N- to C-terminus: Nitrogenase iron protein (296 aa).

11–18 (GKGGIGKS) provides a ligand contact to ATP. A [4Fe-4S] cluster-binding site is contributed by C99. An ADP-ribosylarginine; by dinitrogenase reductase ADP-ribosyltransferase modification is found at R102. A [4Fe-4S] cluster-binding site is contributed by C133.

The protein belongs to the NifH/BchL/ChlL family. Homodimer. The cofactor is [4Fe-4S] cluster. Post-translationally, the reversible ADP-ribosylation of Arg-102 inactivates the nitrogenase reductase and regulates nitrogenase activity.

The catalysed reaction is N2 + 8 reduced [2Fe-2S]-[ferredoxin] + 16 ATP + 16 H2O = H2 + 8 oxidized [2Fe-2S]-[ferredoxin] + 2 NH4(+) + 16 ADP + 16 phosphate + 6 H(+). In terms of biological role, the key enzymatic reactions in nitrogen fixation are catalyzed by the nitrogenase complex, which has 2 components: the iron protein and the molybdenum-iron protein. This Sinorhizobium fredii (strain NBRC 101917 / NGR234) protein is Nitrogenase iron protein (nifH1).